A 917-amino-acid chain; its full sequence is Translation initiation factor IF-2 (917 aa).

2 disordered regions span residues 1-84 (MSDG…GRAG) and 150-318 (KESE…DRER). Residues 10 to 27 (DGNNTPSQGGEQTRSSRL) are compositionally biased toward polar residues. 3 stretches are compositionally biased toward low complexity: residues 69–84 (AAGP…GRAG), 154–177 (QQAA…AAEA), and 227–236 (SRPAAAAPAR). The span at 265–274 (GAPPAPPRRP) shows a compositional bias: pro residues. The span at 282-305 (GGSDRRSGRIDVRAAIEGDDDKTR) shows a compositional bias: basic and acidic residues. The tr-type G domain maps to 416 to 586 (PRAPVVTVMG…LLQSEMLDLK (171 aa)). Residues 425–432 (GHVDHGKT) are G1. A GTP-binding site is contributed by 425–432 (GHVDHGKT). The segment at 450-454 (GITQH) is G2. The segment at 472-475 (DTPG) is G3. GTP contacts are provided by residues 472 to 476 (DTPGH) and 526 to 529 (NKID). Positions 526–529 (NKID) are G4. Residues 562–564 (SAL) form a G5 region.

The protein belongs to the TRAFAC class translation factor GTPase superfamily. Classic translation factor GTPase family. IF-2 subfamily.

The protein resides in the cytoplasm. In terms of biological role, one of the essential components for the initiation of protein synthesis. Protects formylmethionyl-tRNA from spontaneous hydrolysis and promotes its binding to the 30S ribosomal subunits. Also involved in the hydrolysis of GTP during the formation of the 70S ribosomal complex. The chain is Translation initiation factor IF-2 from Gluconobacter oxydans (strain 621H) (Gluconobacter suboxydans).